A 594-amino-acid chain; its full sequence is Isocitrate dehydrogenase kinase/phosphatase (594 aa).

ATP-binding positions include Ala-315–Met-321 and Lys-336. The active site involves Asp-371.

It belongs to the AceK family.

The protein resides in the cytoplasm. It catalyses the reaction L-seryl-[isocitrate dehydrogenase] + ATP = O-phospho-L-seryl-[isocitrate dehydrogenase] + ADP + H(+). Its function is as follows. Bifunctional enzyme which can phosphorylate or dephosphorylate isocitrate dehydrogenase (IDH) on a specific serine residue. This is a regulatory mechanism which enables bacteria to bypass the Krebs cycle via the glyoxylate shunt in response to the source of carbon. When bacteria are grown on glucose, IDH is fully active and unphosphorylated, but when grown on acetate or ethanol, the activity of IDH declines drastically concomitant with its phosphorylation. This is Isocitrate dehydrogenase kinase/phosphatase from Klebsiella pneumoniae (strain 342).